The primary structure comprises 424 residues: Serine--tRNA ligase (424 aa).

Residue 230-232 (TAE) coordinates L-serine. 261-263 (RSE) is an ATP binding site. Residue E284 coordinates L-serine. Residue 348-351 (EISS) coordinates ATP. Position 384 (S384) interacts with L-serine.

This sequence belongs to the class-II aminoacyl-tRNA synthetase family. Type-1 seryl-tRNA synthetase subfamily. As to quaternary structure, homodimer. The tRNA molecule binds across the dimer.

Its subcellular location is the cytoplasm. It carries out the reaction tRNA(Ser) + L-serine + ATP = L-seryl-tRNA(Ser) + AMP + diphosphate + H(+). The enzyme catalyses tRNA(Sec) + L-serine + ATP = L-seryl-tRNA(Sec) + AMP + diphosphate + H(+). It functions in the pathway aminoacyl-tRNA biosynthesis; selenocysteinyl-tRNA(Sec) biosynthesis; L-seryl-tRNA(Sec) from L-serine and tRNA(Sec): step 1/1. Its function is as follows. Catalyzes the attachment of serine to tRNA(Ser). Is also able to aminoacylate tRNA(Sec) with serine, to form the misacylated tRNA L-seryl-tRNA(Sec), which will be further converted into selenocysteinyl-tRNA(Sec). The polypeptide is Serine--tRNA ligase (Streptococcus pneumoniae serotype 2 (strain D39 / NCTC 7466)).